Consider the following 188-residue polypeptide: Peptidyl-tRNA hydrolase (188 aa).

TRNA is bound at residue Phe15. Residue His20 is the Proton acceptor of the active site. TRNA-binding residues include Tyr64, Asn66, and Asn112.

The protein belongs to the PTH family. Monomer.

The protein localises to the cytoplasm. It catalyses the reaction an N-acyl-L-alpha-aminoacyl-tRNA + H2O = an N-acyl-L-amino acid + a tRNA + H(+). In terms of biological role, hydrolyzes ribosome-free peptidyl-tRNAs (with 1 or more amino acids incorporated), which drop off the ribosome during protein synthesis, or as a result of ribosome stalling. Its function is as follows. Catalyzes the release of premature peptidyl moieties from peptidyl-tRNA molecules trapped in stalled 50S ribosomal subunits, and thus maintains levels of free tRNAs and 50S ribosomes. This is Peptidyl-tRNA hydrolase from Borreliella afzelii (strain PKo) (Borrelia afzelii).